The primary structure comprises 339 residues: Glycerol-3-phosphate dehydrogenase [NAD(P)+] (339 aa).

Residues Ser-15, Tyr-16, His-36, and Lys-110 each contribute to the NADPH site. The sn-glycerol 3-phosphate site is built by Lys-110, Gly-139, and Thr-141. NADPH is bound at residue Ala-143. Sn-glycerol 3-phosphate contacts are provided by Lys-195, Asp-248, Ser-258, Arg-259, and Asn-260. Lys-195 (proton acceptor) is an active-site residue. Residue Arg-259 coordinates NADPH. Positions 283 and 285 each coordinate NADPH.

It belongs to the NAD-dependent glycerol-3-phosphate dehydrogenase family.

It is found in the cytoplasm. It carries out the reaction sn-glycerol 3-phosphate + NAD(+) = dihydroxyacetone phosphate + NADH + H(+). The catalysed reaction is sn-glycerol 3-phosphate + NADP(+) = dihydroxyacetone phosphate + NADPH + H(+). It participates in membrane lipid metabolism; glycerophospholipid metabolism. In terms of biological role, catalyzes the reduction of the glycolytic intermediate dihydroxyacetone phosphate (DHAP) to sn-glycerol 3-phosphate (G3P), the key precursor for phospholipid synthesis. The polypeptide is Glycerol-3-phosphate dehydrogenase [NAD(P)+] (Pectobacterium carotovorum subsp. carotovorum (strain PC1)).